Consider the following 346-residue polypeptide: Pheromone receptor 2 (346 aa).

A run of 7 helical transmembrane segments spans residues 8–28 (VSFG…CLIH), 34–54 (IGVL…GINA), 71–94 (LSAI…LQRL), 115–135 (LIDF…FFIV), 160–180 (FIYH…AVLV), 219–239 (VLVS…GGLL), and 270–290 (LSIL…FFGL).

It belongs to the G-protein coupled receptor 4 family.

The protein resides in the membrane. Its function is as follows. Receptor for the A1 pheromone, a prenylated mating factor. The polypeptide is Pheromone receptor 2 (PRA2) (Mycosarcoma maydis (Corn smut fungus)).